We begin with the raw amino-acid sequence, 779 residues long: Filament-like plant protein 1 (779 aa).

A compositionally biased stretch (basic and acidic residues) spans 1 to 14 (MEKRKRESSERSFG). Disordered regions lie at residues 1-55 (MEKR…ETEK), 253-274 (ASFN…MDVS), and 315-336 (PETP…VVVP). A coiled-coil region spans residues 47-200 (VSLEVETEKE…KENVMLRHEL (154 aa)). The span at 256–272 (NDHRSTDSHSDGGERMD) shows a compositional bias: basic and acidic residues. The span at 324 to 336 (SGPESVTEEVVVP) shows a compositional bias: low complexity. Residues 337–674 (SENSLASEIE…ANCQKTIASL (338 aa)) adopt a coiled-coil conformation. The span at 718-731 (FMTRNHPESIKPTK) shows a compositional bias: basic and acidic residues. The interval 718-764 (FMTRNHPESIKPTKETSPSSSSSTASAAVSMPVSTNRGSSEKNRNGF) is disordered. Low complexity predominate over residues 733–752 (TSPSSSSSTASAAVSMPVST).

Belongs to the FPP family. As to quaternary structure, interacts with WPP/MAF proteins.

In Arabidopsis thaliana (Mouse-ear cress), this protein is Filament-like plant protein 1 (FPP1).